The chain runs to 186 residues: ADP-ribosylation factor-like protein 8B-A (186 aa).

Positions 1–19 (MLALINRLLDWFKSLFWKE) form an intramembrane region, note=Mediates targeting to membranes. Residues 29 to 35 (QYSGKTT), 71 to 75 (DIGGQ), and 130 to 133 (NKRD) contribute to the GTP site.

This sequence belongs to the small GTPase superfamily. Arf family.

It localises to the late endosome membrane. The protein localises to the lysosome membrane. Its subcellular location is the cytoplasm. The protein resides in the cytoskeleton. It is found in the spindle. It localises to the early endosome membrane. In terms of biological role, small GTPase which cycles between active GTP-bound and inactive GDP-bound states. In its active state, binds to a variety of effector proteins playing a key role in the regulation of lysosomal positioning which is important for nutrient sensing, natural killer cell-mediated cytotoxicity and antigen presentation. Along with its effectors, orchestrates lysosomal transport and fusion. This Danio rerio (Zebrafish) protein is ADP-ribosylation factor-like protein 8B-A (arl8ba).